The primary structure comprises 886 residues: DNA mismatch repair protein MutS (886 aa).

627–634 (GPNMGGKS) is a binding site for ATP. A disordered region spans residues 834 to 857 (VECADAPAPSDATHPALDRLRDID).

The protein belongs to the DNA mismatch repair MutS family.

This protein is involved in the repair of mismatches in DNA. It is possible that it carries out the mismatch recognition step. This protein has a weak ATPase activity. The polypeptide is DNA mismatch repair protein MutS (Burkholderia vietnamiensis (strain G4 / LMG 22486) (Burkholderia cepacia (strain R1808))).